The primary structure comprises 537 residues: Cytochrome P450 CYP12A2 (537 aa).

Cys483 provides a ligand contact to heme.

The protein belongs to the cytochrome P450 family. The cofactor is heme.

This Musca domestica (House fly) protein is Cytochrome P450 CYP12A2 (CYP12A2).